Consider the following 341-residue polypeptide: N-acetyl-gamma-glutamyl-phosphate reductase (341 aa).

Residue cysteine 147 is part of the active site.

This sequence belongs to the NAGSA dehydrogenase family. Type 1 subfamily.

It localises to the cytoplasm. It carries out the reaction N-acetyl-L-glutamate 5-semialdehyde + phosphate + NADP(+) = N-acetyl-L-glutamyl 5-phosphate + NADPH + H(+). The protein operates within amino-acid biosynthesis; L-arginine biosynthesis; N(2)-acetyl-L-ornithine from L-glutamate: step 3/4. In terms of biological role, catalyzes the NADPH-dependent reduction of N-acetyl-5-glutamyl phosphate to yield N-acetyl-L-glutamate 5-semialdehyde. This is N-acetyl-gamma-glutamyl-phosphate reductase from Dehalococcoides mccartyi (strain CBDB1).